Consider the following 430-residue polypeptide: Adenylosuccinate synthetase (430 aa).

GTP-binding positions include 12 to 18 and 40 to 42; these read GDEGKGK and GHT. D13 (proton acceptor) is an active-site residue. The Mg(2+) site is built by D13 and G40. Residues 13-16, 38-41, T130, R144, Q224, T239, and R303 each bind IMP; these read DEGK and NAGH. The active-site Proton donor is H41. Residue 299–305 participates in substrate binding; that stretch reads VVTGRKR. Residues R305, 331–333, and 413–415 each bind GTP; these read KLD and STS.

The protein belongs to the adenylosuccinate synthetase family. As to quaternary structure, homodimer. It depends on Mg(2+) as a cofactor.

The protein localises to the cytoplasm. It catalyses the reaction IMP + L-aspartate + GTP = N(6)-(1,2-dicarboxyethyl)-AMP + GDP + phosphate + 2 H(+). The protein operates within purine metabolism; AMP biosynthesis via de novo pathway; AMP from IMP: step 1/2. Functionally, plays an important role in the de novo pathway of purine nucleotide biosynthesis. Catalyzes the first committed step in the biosynthesis of AMP from IMP. The polypeptide is Adenylosuccinate synthetase (Methylobacterium nodulans (strain LMG 21967 / CNCM I-2342 / ORS 2060)).